A 607-amino-acid polypeptide reads, in one-letter code: CUB and zona pellucida-like domain-containing protein 1 (607 aa).

A signal peptide spans methionine 1–alanine 19. The Lumenal segment spans residues glutamine 20–histidine 568. Asparagine 22 carries an N-linked (GlcNAc...) asparagine glycan. A disulfide bridge connects residues cysteine 32 and cysteine 58. CUB domains follow at residues cysteine 32–serine 146 and cysteine 154–threonine 265. N-linked (GlcNAc...) asparagine glycosylation is present at asparagine 67. 2 cysteine pairs are disulfide-bonded: cysteine 85–cysteine 107 and cysteine 154–cysteine 180. Asparagine 195 is a glycosylation site (N-linked (GlcNAc...) asparagine). Cysteines 207 and 229 form a disulfide. The region spanning serine 276–arginine 519 is the ZP domain. An N-linked (GlcNAc...) asparagine glycan is attached at asparagine 419. Cysteine 442 and cysteine 498 are disulfide-bonded. The helical transmembrane segment at leucine 569 to valine 589 threads the bilayer. Topologically, residues arginine 590–tyrosine 607 are cytoplasmic.

Expressed predominantly in epithelium of uterus and oviduct.

The protein resides in the zymogen granule membrane. Localized to zymogen granules, where it functions in trypsinogen activation. May indirectly regulate cell motility, cell-cell and cell/extracellular matrix interactions. This Rattus norvegicus (Rat) protein is CUB and zona pellucida-like domain-containing protein 1.